The sequence spans 501 residues: Probable cytosol aminopeptidase (501 aa).

Mn(2+) contacts are provided by Lys272 and Asp277. Residue Lys284 is part of the active site. Residues Asp295, Asp354, and Glu356 each contribute to the Mn(2+) site. Residue Arg358 is part of the active site.

Belongs to the peptidase M17 family. It depends on Mn(2+) as a cofactor.

The protein localises to the cytoplasm. It catalyses the reaction Release of an N-terminal amino acid, Xaa-|-Yaa-, in which Xaa is preferably Leu, but may be other amino acids including Pro although not Arg or Lys, and Yaa may be Pro. Amino acid amides and methyl esters are also readily hydrolyzed, but rates on arylamides are exceedingly low.. It carries out the reaction Release of an N-terminal amino acid, preferentially leucine, but not glutamic or aspartic acids.. Functionally, presumably involved in the processing and regular turnover of intracellular proteins. Catalyzes the removal of unsubstituted N-terminal amino acids from various peptides. The sequence is that of Probable cytosol aminopeptidase from Buchnera aphidicola subsp. Baizongia pistaciae (strain Bp).